Reading from the N-terminus, the 217-residue chain is ATP-dependent Clp protease proteolytic subunit 1 (217 aa).

The interval 1–24 (MTPLTTGWHPALSPRAEEGDTPPS) is disordered. Ser108 functions as the Nucleophile in the catalytic mechanism. Residue His133 is part of the active site.

It belongs to the peptidase S14 family. As to quaternary structure, fourteen ClpP subunits assemble into 2 heptameric rings which stack back to back to give a disk-like structure with a central cavity, resembling the structure of eukaryotic proteasomes.

The protein localises to the cytoplasm. It catalyses the reaction Hydrolysis of proteins to small peptides in the presence of ATP and magnesium. alpha-casein is the usual test substrate. In the absence of ATP, only oligopeptides shorter than five residues are hydrolyzed (such as succinyl-Leu-Tyr-|-NHMec, and Leu-Tyr-Leu-|-Tyr-Trp, in which cleavage of the -Tyr-|-Leu- and -Tyr-|-Trp bonds also occurs).. In terms of biological role, cleaves peptides in various proteins in a process that requires ATP hydrolysis. Has a chymotrypsin-like activity. Plays a major role in the degradation of misfolded proteins. The chain is ATP-dependent Clp protease proteolytic subunit 1 from Streptomyces avermitilis (strain ATCC 31267 / DSM 46492 / JCM 5070 / NBRC 14893 / NCIMB 12804 / NRRL 8165 / MA-4680).